We begin with the raw amino-acid sequence, 58 residues long: Large ribosomal subunit protein eL24 (58 aa).

Zn(2+) is bound by residues Cys-6, Cys-9, Cys-32, and Cys-36. Residues 6-36 form a C4-type zinc finger; that stretch reads CAFCGADILPGYGIMYVKTDGTTLRFCSRKC.

It belongs to the eukaryotic ribosomal protein eL24 family. In terms of assembly, part of the 50S ribosomal subunit. Forms a cluster with proteins L3 and L14. Zn(2+) is required as a cofactor.

Binds to the 23S rRNA. The chain is Large ribosomal subunit protein eL24 from Pyrobaculum islandicum (strain DSM 4184 / JCM 9189 / GEO3).